A 134-amino-acid polypeptide reads, in one-letter code: Protein dpy-30 homolog (134 aa).

The disordered stretch occupies residues 1 to 81; sequence MEAKTDAPIS…ETNNMPTRQY (81 aa). Low complexity predominate over residues 31–68; the sequence is AQANPTAAPGAPPSGAIAVGQSTNPVAQQQQQPAVAKK. Positions 71–81 are enriched in polar residues; the sequence is SETNNMPTRQY.

It belongs to the dpy-30 family. Core component of several methyltransferase-containing complexes. Component of the SET1 complex, composed at least of the catalytic subunit Set1, wds/WDR5, Wdr82, Rbbp5, ash2, Cfp1/CXXC1, hcf and Dpy-30L1. Component of the MLL3/4 complex composed at least of the catalytic subunit trr, ash2, Rbbp5, Dpy-30L1, wds, hcf, ptip, Pa1, Utx, Lpt and Ncoa6. Expressed in larval brain, gonad, imaginal disk and salivary gland and in adult brain, testis, ovary and salivary gland.

It is found in the nucleus. Its function is as follows. Component of the SET1 complex that specifically di- and trimethylates 'Lys-4' of histone H3 and of the MLL3/4 complex which also methylates histone H3 'Lys-4'. Inhibits MTF-1 transcription factor activity. The sequence is that of Protein dpy-30 homolog from Drosophila melanogaster (Fruit fly).